The following is a 390-amino-acid chain: ATP phosphoribosyltransferase regulatory subunit (390 aa).

Belongs to the class-II aminoacyl-tRNA synthetase family. HisZ subfamily. As to quaternary structure, heteromultimer composed of HisG and HisZ subunits.

Its subcellular location is the cytoplasm. It participates in amino-acid biosynthesis; L-histidine biosynthesis; L-histidine from 5-phospho-alpha-D-ribose 1-diphosphate: step 1/9. Functionally, required for the first step of histidine biosynthesis. May allow the feedback regulation of ATP phosphoribosyltransferase activity by histidine. The polypeptide is ATP phosphoribosyltransferase regulatory subunit (Nitrosomonas eutropha (strain DSM 101675 / C91 / Nm57)).